The sequence spans 249 residues: Diaminopimelate epimerase (249 aa).

The substrate site is built by Asn11 and Asn60. Cys69 serves as the catalytic Proton donor. Residues 70–71 (GN), Asn164, and 182–183 (ER) each bind substrate. Cys192 (proton acceptor) is an active-site residue. 193-194 (GT) provides a ligand contact to substrate.

Belongs to the diaminopimelate epimerase family. As to quaternary structure, homodimer.

It localises to the cytoplasm. It carries out the reaction (2S,6S)-2,6-diaminopimelate = meso-2,6-diaminopimelate. Its pathway is amino-acid biosynthesis; L-lysine biosynthesis via DAP pathway; DL-2,6-diaminopimelate from LL-2,6-diaminopimelate: step 1/1. Catalyzes the stereoinversion of LL-2,6-diaminopimelate (L,L-DAP) to meso-diaminopimelate (meso-DAP), a precursor of L-lysine and an essential component of the bacterial peptidoglycan. This Campylobacter jejuni subsp. doylei (strain ATCC BAA-1458 / RM4099 / 269.97) protein is Diaminopimelate epimerase.